The chain runs to 189 residues: Elongation factor P (189 aa).

It belongs to the elongation factor P family.

Its subcellular location is the cytoplasm. The protein operates within protein biosynthesis; polypeptide chain elongation. Functionally, involved in peptide bond synthesis. Stimulates efficient translation and peptide-bond synthesis on native or reconstituted 70S ribosomes in vitro. Probably functions indirectly by altering the affinity of the ribosome for aminoacyl-tRNA, thus increasing their reactivity as acceptors for peptidyl transferase. The polypeptide is Elongation factor P (Rhizobium etli (strain ATCC 51251 / DSM 11541 / JCM 21823 / NBRC 15573 / CFN 42)).